Consider the following 60-residue polypeptide: Large ribosomal subunit protein bL32 (60 aa).

Belongs to the bacterial ribosomal protein bL32 family.

This Pediococcus pentosaceus (strain ATCC 25745 / CCUG 21536 / LMG 10740 / 183-1w) protein is Large ribosomal subunit protein bL32.